A 450-amino-acid chain; its full sequence is tRNA-2-methylthio-N(6)-dimethylallyladenosine synthase (450 aa).

One can recognise an MTTase N-terminal domain in the interval 14 to 132; it reads GEFFIETWGC…FPNYLNEVKK (119 aa). Cys-23, Cys-59, Cys-93, Cys-169, Cys-173, and Cys-176 together coordinate [4Fe-4S] cluster. In terms of domain architecture, Radical SAM core spans 155 to 385; the sequence is RKNSMKAFVT…VEVVNEISAK (231 aa). Residues 388-450 enclose the TRAM domain; that stretch reads KAYEGKIEEV…NSFSLTGEEI (63 aa).

Belongs to the methylthiotransferase family. MiaB subfamily. As to quaternary structure, monomer. [4Fe-4S] cluster is required as a cofactor.

The protein localises to the cytoplasm. It catalyses the reaction N(6)-dimethylallyladenosine(37) in tRNA + (sulfur carrier)-SH + AH2 + 2 S-adenosyl-L-methionine = 2-methylsulfanyl-N(6)-dimethylallyladenosine(37) in tRNA + (sulfur carrier)-H + 5'-deoxyadenosine + L-methionine + A + S-adenosyl-L-homocysteine + 2 H(+). In terms of biological role, catalyzes the methylthiolation of N6-(dimethylallyl)adenosine (i(6)A), leading to the formation of 2-methylthio-N6-(dimethylallyl)adenosine (ms(2)i(6)A) at position 37 in tRNAs that read codons beginning with uridine. The protein is tRNA-2-methylthio-N(6)-dimethylallyladenosine synthase of Clostridium botulinum (strain Loch Maree / Type A3).